The following is an 85-amino-acid chain: Antitoxin VapB43 (85 aa).

The disordered stretch occupies residues 37-60 (GLNPPKPQAAGRYRVQPSGKGGLR).

Functionally, antitoxin component of a type II toxin-antitoxin (TA) system. This Mycobacterium tuberculosis (strain CDC 1551 / Oshkosh) protein is Antitoxin VapB43 (vapB43).